The following is a 125-amino-acid chain: SOSS complex subunit C homolog (125 aa).

A disordered region spans residues 43-77 (MPSPQLLGQPTVAPEFLPQGVGLPTNATPPRSAFN). Positions 67–77 (TNATPPRSAFN) are enriched in polar residues.

This sequence belongs to the SOSS-C family.

This is SOSS complex subunit C homolog from Drosophila persimilis (Fruit fly).